We begin with the raw amino-acid sequence, 255 residues long: BTB/POZ domain-containing protein kctd15 (255 aa).

A BTB domain is found at Ala30 to Glu100.

Forms oligomers, predominantly homopentamers. Interacts with TFAP2A; this interaction inhibits TFAP2A transcriptional activation.

It localises to the nucleus. Functionally, during embryonic development, interferes with neural crest formation. Inhibits AP2 transcriptional activity by interaction with its activation domain. The polypeptide is BTB/POZ domain-containing protein kctd15 (kctd15) (Xenopus tropicalis (Western clawed frog)).